A 191-amino-acid polypeptide reads, in one-letter code: Ribosomal RNA large subunit methyltransferase E (191 aa).

The S-adenosyl-L-methionine site is built by Gly-49, Trp-51, Asp-66, Asp-82, and Asp-105. Lys-145 (proton acceptor) is an active-site residue.

The protein belongs to the class I-like SAM-binding methyltransferase superfamily. RNA methyltransferase RlmE family.

It localises to the cytoplasm. It carries out the reaction uridine(2552) in 23S rRNA + S-adenosyl-L-methionine = 2'-O-methyluridine(2552) in 23S rRNA + S-adenosyl-L-homocysteine + H(+). Specifically methylates the uridine in position 2552 of 23S rRNA at the 2'-O position of the ribose in the fully assembled 50S ribosomal subunit. The polypeptide is Ribosomal RNA large subunit methyltransferase E (Archaeoglobus fulgidus (strain ATCC 49558 / DSM 4304 / JCM 9628 / NBRC 100126 / VC-16)).